A 235-amino-acid polypeptide reads, in one-letter code: MVQQKERETFSQRLALACDKAGLPLHGRQADLAVRLKVTPKAISKWFNGESIPRKDKMESLASVLGTTAAYLHGYADDDGITVNHLSRSNDYYRVDVLDVQASAGPGTMVSNEFIEKIRAIEYTTEQARILFNGRPQESVKVITVRGDSMEGTINPGDEIFVDVSITCFDGDGIYVFVYGKTMHVKRLQMQKNRLAVISDNAAYDRWYIEEGEEEQLHILAKVLIRQSIDYKRFG.

The 59-residue stretch at leucine 14–leucine 72 folds into the HTH cro/C1-type domain. A DNA-binding region (H-T-H motif) is located at residues leucine 25–serine 44.

In Escherichia phage HK022 (Bacteriophage HK022), this protein is 26 kDa repressor protein (CI-HTT).